Consider the following 369-residue polypeptide: Queuine tRNA-ribosyltransferase (369 aa).

The Proton acceptor role is filled by aspartate 89. Substrate-binding positions include 89 to 93 (DSGGF), aspartate 143, glutamine 187, and glycine 214. An RNA binding region spans residues 245 to 251 (GVGTPED). Aspartate 264 functions as the Nucleophile in the catalytic mechanism. Positions 269–273 (TRNAR) are RNA binding; important for wobble base 34 recognition. The Zn(2+) site is built by cysteine 302, cysteine 304, cysteine 307, and histidine 333.

Belongs to the queuine tRNA-ribosyltransferase family. Homodimer. Within each dimer, one monomer is responsible for RNA recognition and catalysis, while the other monomer binds to the replacement base PreQ1. The cofactor is Zn(2+).

The catalysed reaction is 7-aminomethyl-7-carbaguanine + guanosine(34) in tRNA = 7-aminomethyl-7-carbaguanosine(34) in tRNA + guanine. It functions in the pathway tRNA modification; tRNA-queuosine biosynthesis. In terms of biological role, catalyzes the base-exchange of a guanine (G) residue with the queuine precursor 7-aminomethyl-7-deazaguanine (PreQ1) at position 34 (anticodon wobble position) in tRNAs with GU(N) anticodons (tRNA-Asp, -Asn, -His and -Tyr). Catalysis occurs through a double-displacement mechanism. The nucleophile active site attacks the C1' of nucleotide 34 to detach the guanine base from the RNA, forming a covalent enzyme-RNA intermediate. The proton acceptor active site deprotonates the incoming PreQ1, allowing a nucleophilic attack on the C1' of the ribose to form the product. After dissociation, two additional enzymatic reactions on the tRNA convert PreQ1 to queuine (Q), resulting in the hypermodified nucleoside queuosine (7-(((4,5-cis-dihydroxy-2-cyclopenten-1-yl)amino)methyl)-7-deazaguanosine). The sequence is that of Queuine tRNA-ribosyltransferase from Dechloromonas aromatica (strain RCB).